The chain runs to 200 residues: NADH-quinone oxidoreductase subunit C (200 aa).

Belongs to the complex I 30 kDa subunit family. As to quaternary structure, NDH-1 is composed of 14 different subunits. Subunits NuoB, C, D, E, F, and G constitute the peripheral sector of the complex.

Its subcellular location is the cell inner membrane. The catalysed reaction is a quinone + NADH + 5 H(+)(in) = a quinol + NAD(+) + 4 H(+)(out). Functionally, NDH-1 shuttles electrons from NADH, via FMN and iron-sulfur (Fe-S) centers, to quinones in the respiratory chain. The immediate electron acceptor for the enzyme in this species is believed to be ubiquinone. Couples the redox reaction to proton translocation (for every two electrons transferred, four hydrogen ions are translocated across the cytoplasmic membrane), and thus conserves the redox energy in a proton gradient. This Maricaulis maris (strain MCS10) (Caulobacter maris) protein is NADH-quinone oxidoreductase subunit C.